A 253-amino-acid chain; its full sequence is 5-oxoprolinase subunit A (253 aa).

It belongs to the LamB/PxpA family. Forms a complex composed of PxpA, PxpB and PxpC.

The enzyme catalyses 5-oxo-L-proline + ATP + 2 H2O = L-glutamate + ADP + phosphate + H(+). Its function is as follows. Catalyzes the cleavage of 5-oxoproline to form L-glutamate coupled to the hydrolysis of ATP to ADP and inorganic phosphate. This is 5-oxoprolinase subunit A from Bacillus cereus (strain ATCC 14579 / DSM 31 / CCUG 7414 / JCM 2152 / NBRC 15305 / NCIMB 9373 / NCTC 2599 / NRRL B-3711).